The primary structure comprises 251 residues: Ubiquinone/menaquinone biosynthesis C-methyltransferase UbiE (251 aa).

S-adenosyl-L-methionine-binding positions include threonine 74, aspartate 95, and 123-124; that span reads NA.

Belongs to the class I-like SAM-binding methyltransferase superfamily. MenG/UbiE family.

It catalyses the reaction a 2-demethylmenaquinol + S-adenosyl-L-methionine = a menaquinol + S-adenosyl-L-homocysteine + H(+). The catalysed reaction is a 2-methoxy-6-(all-trans-polyprenyl)benzene-1,4-diol + S-adenosyl-L-methionine = a 5-methoxy-2-methyl-3-(all-trans-polyprenyl)benzene-1,4-diol + S-adenosyl-L-homocysteine + H(+). Its pathway is quinol/quinone metabolism; menaquinone biosynthesis; menaquinol from 1,4-dihydroxy-2-naphthoate: step 2/2. It functions in the pathway cofactor biosynthesis; ubiquinone biosynthesis. Methyltransferase required for the conversion of demethylmenaquinol (DMKH2) to menaquinol (MKH2) and the conversion of 2-polyprenyl-6-methoxy-1,4-benzoquinol (DDMQH2) to 2-polyprenyl-3-methyl-6-methoxy-1,4-benzoquinol (DMQH2). This Edwardsiella ictaluri (strain 93-146) protein is Ubiquinone/menaquinone biosynthesis C-methyltransferase UbiE.